A 442-amino-acid chain; its full sequence is tRNA-2-methylthio-N(6)-dimethylallyladenosine synthase (442 aa).

In terms of domain architecture, MTTase N-terminal spans Lys-2 to Thr-120. [4Fe-4S] cluster is bound by residues Cys-11, Cys-49, Cys-83, Cys-157, Cys-161, and Cys-164. The Radical SAM core domain occupies Arg-143 to Arg-375. A TRAM domain is found at Gln-378–Glu-441.

Belongs to the methylthiotransferase family. MiaB subfamily. Monomer. Requires [4Fe-4S] cluster as cofactor.

It is found in the cytoplasm. It catalyses the reaction N(6)-dimethylallyladenosine(37) in tRNA + (sulfur carrier)-SH + AH2 + 2 S-adenosyl-L-methionine = 2-methylsulfanyl-N(6)-dimethylallyladenosine(37) in tRNA + (sulfur carrier)-H + 5'-deoxyadenosine + L-methionine + A + S-adenosyl-L-homocysteine + 2 H(+). Catalyzes the methylthiolation of N6-(dimethylallyl)adenosine (i(6)A), leading to the formation of 2-methylthio-N6-(dimethylallyl)adenosine (ms(2)i(6)A) at position 37 in tRNAs that read codons beginning with uridine. The chain is tRNA-2-methylthio-N(6)-dimethylallyladenosine synthase from Neisseria gonorrhoeae (strain NCCP11945).